A 247-amino-acid polypeptide reads, in one-letter code: UPF0246 protein CD630_18230 (247 aa).

This sequence belongs to the UPF0246 family.

The polypeptide is UPF0246 protein CD630_18230 (Clostridioides difficile (strain 630) (Peptoclostridium difficile)).